Here is a 174-residue protein sequence, read N- to C-terminus: Co-chaperone protein HscB homolog (174 aa).

Residues 2 to 74 (NYFELFKFPP…IRRAEHMLSL (73 aa)) form the J domain.

Belongs to the HscB family. In terms of assembly, interacts with HscA and stimulates its ATPase activity.

Its function is as follows. Co-chaperone involved in the maturation of iron-sulfur cluster-containing proteins. Seems to help targeting proteins to be folded toward HscA. The chain is Co-chaperone protein HscB homolog from Shewanella baltica (strain OS195).